Consider the following 437-residue polypeptide: Aspartic proteinase nepenthesin-1 (437 aa).

Residues 1–24 (MASSLYSFLLALSIVYIFVAPTHS) form the signal peptide. Residues 25–78 (TSRTALNHRHEAKVTGFQIMLEHVDSGKNLTKFQLLERAIERGSRRLQRLEAML) constitute a propeptide, activation peptide. N-linked (GlcNAc...) asparagine glycans are attached at residues asparagine 53 and asparagine 98. In terms of domain architecture, Peptidase A1 spans 95-430 (YLMNLSIGTP…DTGNSVVSFA (336 aa)). The active site involves aspartate 113. 6 disulfides stabilise this stretch: cysteine 123/cysteine 126, cysteine 129/cysteine 203, cysteine 150/cysteine 168, cysteine 155/cysteine 163, cysteine 240/cysteine 434, and cysteine 354/cysteine 395. Asparagine 131 carries N-linked (GlcNAc...) asparagine glycosylation. Asparagine 198, asparagine 267, and asparagine 307 each carry an N-linked (GlcNAc...) asparagine glycan. Aspartate 315 is an active-site residue. A glycan (N-linked (GlcNAc...) asparagine) is linked at asparagine 345.

Belongs to the peptidase A1 family.

The protein localises to the secreted. It carries out the reaction Similar to pepsin, but also cleaves on either side of Asp and at Lys-|-Arg.. With respect to regulation, inhibited by pepstatin and by diazoacetyl-D,L-norleucine methyl ester (DAN) in the presence of Cu(2+) ions. Its function is as follows. Extracellular proteinase found in the pitcher fluid of carnivorous plants. Digest prey for nitrogen uptake. The chain is Aspartic proteinase nepenthesin-1 (nep1) from Nepenthes gracilis (Slender pitcher plant).